A 282-amino-acid chain; its full sequence is E3 ubiquitin-protein ligase SIAH1 (282 aa).

Polar residues predominate over residues 1–17 (MSRQTATALPTGTSKCP). The tract at residues 1-22 (MSRQTATALPTGTSKCPPSQRV) is disordered. Ser19 is subject to Phosphoserine; by ATM and ATR. An RING-type zinc finger spans residues 41–76 (CPVCFDYVLPPILQCQSGHLVCSNCRPKLTCCPTCR). Positions 90 to 282 (VANSVLFPCK…LGINVTISMC (193 aa)) are SBD. The SIAH-type zinc finger occupies 93–153 (SVLFPCKYAS…VMPHLMHQHK (61 aa)). Zn(2+) is bound by residues Cys98, Cys105, His117, Cys121, Cys128, Cys135, His147, and His152.

This sequence belongs to the SINA (Seven in absentia) family. As to quaternary structure, homodimer. Interacts with group 1 glutamate receptors GRM1 and GRM5. Interacts with DAB1, which may inhibit its activity. Interacts with UBE2E2. Interacts with PEG3. Interacts with GAPDH; leading to stabilize SIAH1. Component of some large E3 complex composed of UBE2D1, SIAH1, CACYBP/SIP, SKP1, APC and TBL1X. Interacts with UBE2I. Interacts with alpha-tubulin. Interacts with PEG10, which may inhibit its activity. Interacts with KHDRBS3. Interacts with SNCAIP. Interacts with HIPK2; the interaction is promoted by DAZAP2 and results in SIAH1-mediated ubiquitination and subsequent proteasomal degradation of HIPK2. Interacts with DAZAP2; the interaction is decreased following phosphorylation of DAZAP2 by HIPK2. Interacts with Bassoon/BSN and Piccolo/PLCO; these interactions negatively regulate SIAH1 E3 ligase activity. Interacts with DCC. Interacts with AXIN1; catalyzes AXIN1 ubiquitination and subsequent proteasome-mediated ubiquitin-dependent degradation. Post-translationally, phosphorylated on Ser-19 by ATM and ATR. This phosphorylation disrupts SIAH1 interaction with HIPK2, and subsequent proteasomal degradation of HIPK2. In terms of tissue distribution, widely expressed at a low level. Down-regulated in advanced hepatocellular carcinomas.

The protein resides in the cytoplasm. It localises to the nucleus. It catalyses the reaction S-ubiquitinyl-[E2 ubiquitin-conjugating enzyme]-L-cysteine + [acceptor protein]-L-lysine = [E2 ubiquitin-conjugating enzyme]-L-cysteine + N(6)-ubiquitinyl-[acceptor protein]-L-lysine.. It participates in protein modification; protein ubiquitination. With respect to regulation, inhibited by interaction with SNCAIP (isoform 2, but not isoform 1). May be inhibited by interaction with PEG10. In terms of biological role, E3 ubiquitin-protein ligase that mediates ubiquitination and subsequent proteasomal degradation of target proteins. E3 ubiquitin ligases accept ubiquitin from an E2 ubiquitin-conjugating enzyme in the form of a thioester and then directly transfers the ubiquitin to targeted substrates. Mediates E3 ubiquitin ligase activity either through direct binding to substrates or by functioning as the essential RING domain subunit of larger E3 complexes. Triggers the ubiquitin-mediated degradation of many substrates, including proteins involved in transcription regulation (ELL2, MYB, POU2AF1, PML and RBBP8), a cell surface receptor (DCC), the cell-surface receptor-type tyrosine kinase FLT3, the cytoplasmic signal transduction molecules (KLF10/TIEG1 and NUMB), an antiapoptotic protein (BAG1), a microtubule motor protein (KIF22), a protein involved in synaptic vesicle function in neurons (SYP), a structural protein (CTNNB1) and SNCAIP. Confers constitutive instability to HIPK2 through proteasomal degradation. It is thereby involved in many cellular processes such as apoptosis, tumor suppression, cell cycle, axon guidance, transcription regulation, spermatogenesis and TNF-alpha signaling. Has some overlapping function with SIAH2. Induces apoptosis in cooperation with PEG3. Upon nitric oxid (NO) generation that follows apoptotic stimulation, interacts with S-nitrosylated GAPDH, mediating the translocation of GAPDH to the nucleus. GAPDH acts as a stabilizer of SIAH1, facilitating the degradation of nuclear proteins. Mediates ubiquitination and degradation of EGLN2 and EGLN3 in response to the unfolded protein response (UPR), leading to their degradation and subsequent stabilization of ATF4. Also part of the Wnt signaling pathway in which it mediates the Wnt-induced ubiquitin-mediated proteasomal degradation of AXIN1. The chain is E3 ubiquitin-protein ligase SIAH1 (SIAH1) from Homo sapiens (Human).